The sequence spans 452 residues: Scaffold protein ILK (452 aa).

Met-1 carries the post-translational modification N-acetylmethionine. ANK repeat units follow at residues 2–30, 31–63, 64–96, 97–129, and 130–174; these read DDIF…LNQG, DDHG…INVM, NRGD…INAV, NEHG…VSIC, and NKYG…GTTR. Residues 33 to 139 form an interaction with LIMS1 region; that stretch reads HGFSPLHWAC…NKYGEMPVDK (107 aa). A Phosphothreonine; by PAK1 modification is found at Thr-173. Residues 180 to 212 form a PH-like; mediates interaction with TGFB1I1 region; that stretch reads GTLNKHSGIDFKQLNFLTKLNENHSGELWKGRW. A Phosphoserine modification is found at Ser-186. A Protein kinase domain is found at 193–446; sequence LNFLTKLNEN…PKFDMIVPIL (254 aa). Asn-200, Asn-202, His-203, Ser-204, and Lys-220 together coordinate ATP. Phosphoserine; by PAK1 is present on Ser-246. ATP-binding residues include His-270, Met-272, and Asn-279. Residue Asp-339 participates in Mg(2+) binding. An ATP-binding site is contributed by Lys-341. The Nuclear localization signal motif lies at 363–371; it reads KKPEDTNRR. N6-acetyllysine is present on Lys-426.

The protein belongs to the protein kinase superfamily. TKL Ser/Thr protein kinase family. In terms of assembly, component of the heterotrimeric IPP (ILK-PINCH-PARVIN) complex composed of ILK, LIMS1/PINCH and PARVA; the complex binds to F-actin via the C-terminal tail of LIMS1 and the N-terminal region of PARVA, promoting F-actin filament bundling. Formation of the IPP complex is dependent on protein kinase C and precedes integrin-mediated cell adhesion and spreading. ILK also interacts with LIMS2/PINCH2 and with PARVB and PARVG which may substitute for LIMS1 and PARVA in the IPP complex; PARVA and PARVB compete for the same binding site. Interaction with PARVG promotes the establishment of cell polarity required for leukocyte migration. Interacts with the cytoplasmic domain of integrin ITGB1 and may also interact with integrins ITGB2, ITGB3 and/or ITGB5. Interacts probably also with TGFB1I1. Interacts (via ANK repeats) with EPHA1 (via SAM domain); stimulated by EFNA1 but independent of the kinase activity of EPHA1. Interacts with FERMT2. Interacts with LIMD2; leading to activate the protein kinase activity. Interacts with PXN/PAXILLIN (via LD motif 4). Interacts with CCDC25 (via cytoplasmic region); initiating the ILK-PARVB cascade to induce cytoskeleton rearrangement and directional migration of cells. Interacts with IQGAP1; the interaction is required for localization of IQGAP1 to the cell cortex. Post-translationally, phosphorylation by PAK1 modulates ILK subcellular location by promoting its nuclear export. In terms of tissue distribution, highly expressed in heart followed by skeletal muscle, pancreas and kidney. Weakly expressed in placenta, lung and liver.

The protein resides in the cell junction. It is found in the focal adhesion. The protein localises to the cell membrane. It localises to the cell projection. Its subcellular location is the lamellipodium. The protein resides in the cytoplasm. It is found in the myofibril. The protein localises to the sarcomere. It localises to the nucleus. Its subcellular location is the cytoskeleton. The protein resides in the microtubule organizing center. It is found in the centrosome. The protein localises to the cell cortex. Its function is as follows. Scaffold protein which mediates protein-protein interactions during a range of cellular events including focal adhesion assembly, cell adhesion and cell migration. Regulates integrin-mediated signal transduction by contributing to inside-out integrin activation. Recruits PARVA and LIMS1/PITCH to form the heterotrimeric IPP (ILK-PINCH-PARVIN) complex which binds to F-actin via the C-terminal tail of LIMS1 and the N-terminal region of PARVA, promoting F-actin filament bundling, a process required to generate force for actin cytoskeleton reorganization and subsequent dynamic cell adhesion events such as cell spreading and migration. Binding to PARVA promotes effective assembly of ILK into focal adhesions while PARVA-bound ILK can simultaneously engage integrin-beta cytoplasmic tails to mediate cell adhesion. Plays a role with PARVG in promoting the cell adhesion and spreading of leukocytes. Acts as an upstream effector of both AKT1/PKB and GSK3. Mediates trafficking of caveolae to the cell surface in an ITGB1-dependent manner by promoting the recruitment of IQGAP1 to the cell cortex which cooperates with its effector DIAPH1 to locally stabilize microtubules and allow stable insertion of caveolae into the plasma membrane. Required for the maintenance of mitotic spindle integrity by promoting phosphorylation of TACC3 by AURKA. Associates with chromatin and may act as a negative regulator of transcription when located in the nucleus. This Homo sapiens (Human) protein is Scaffold protein ILK.